We begin with the raw amino-acid sequence, 919 residues long: Envelope glycoprotein B (919 aa).

The N-terminal stretch at 1–28 (MSKDSTSLGVRTIVIACLVLLGCCIVEA) is a signal peptide. The Virion surface portion of the chain corresponds to 29–788 (VPTTPSSQPS…SGIASFINNP (760 aa)). Cystine bridges form between cysteine 81–cysteine 586, cysteine 98–cysteine 542, cysteine 172–cysteine 237, cysteine 330–cysteine 378, and cysteine 607–cysteine 647. The N-linked (GlcNAc...) asparagine; by host glycan is linked to asparagine 106. Residues 138–144 (VWKGYSH) are involved in fusion and/or binding to host membrane. A glycan (N-linked (GlcNAc...) asparagine; by host) is linked at asparagine 216. Residues 223 to 231 (GWMPWRHYT) are involved in fusion and/or binding to host membrane. Asparagine 321, asparagine 364, asparagine 438, asparagine 456, asparagine 493, asparagine 496, and asparagine 499 each carry an N-linked (GlcNAc...) asparagine; by host glycan. Residues asparagine 666 and asparagine 688 are each glycosylated (N-linked (GlcNAc...) asparagine; by host). Hydrophobic membrane proximal region stretches follow at residues 733–786 (IDSV…SFIN) and 765–785 (TLVL…ASFI). A helical membrane pass occupies residues 789 to 809 (FGGLAIGLLVIAGLVAAFFAY). The Intravirion segment spans residues 810–919 (RYVMQLRSNP…DDPMESEKMV (110 aa)). A Golgi targeting motif is present at residues 864–867 (YMSM). The interval 900–919 (RGPKYTRLREDDPMESEKMV) is disordered. An Internalization motif motif is present at residues 904–907 (YTRL). The segment covering 906–919 (RLREDDPMESEKMV) has biased composition (basic and acidic residues).

Belongs to the herpesviridae glycoprotein B family. Homotrimer; disulfide-linked. Binds to heparan sulfate proteoglycans. Interacts with gH/gL heterodimer. A proteolytic cleavage by host furin generates two subunits that remain linked by disulfide bonds.

Its subcellular location is the virion membrane. It localises to the host cell membrane. The protein localises to the host endosome membrane. It is found in the host Golgi apparatus membrane. In terms of biological role, envelope glycoprotein that forms spikes at the surface of virion envelope. Essential for the initial attachment to heparan sulfate moieties of the host cell surface proteoglycans. Involved in fusion of viral and cellular membranes leading to virus entry into the host cell. Following initial binding to its host receptors, membrane fusion is mediated by the fusion machinery composed at least of gB and the heterodimer gH/gL. May be involved in the fusion between the virion envelope and the outer nuclear membrane during virion egress. This is Envelope glycoprotein B from Equus caballus (Horse).